The sequence spans 831 residues: MAGSSAEQAADYRSILSISDEAARVQALDQHLSTRSYIQGYSLSQADVDVFRQLSAPPADSRLFHVARWFRHIEALLGGPQGRDEPCRLQASKGRRVQPQWSPPAGTEPCRLRLYNSLTRNKDVFIPQDGKKVTWYCCGPTVYDASHMGHARSYISFDILRRVLRDYFQYDVFYCMNITDIDDKIIRRARQNYLFEQYREQKPPATQLLKDVRDAMKPFSVKLSETTDPDKRQMLERIQNSVKLATEPLEQAVRSSLSGEEVDSKVQVLLEEAKDLLSDWLDSTGGSEVTDNSIFSKLPKFWEEEFHKDMEALNVLPPDVLTRVSEYVPEIVNFVQKIVDNGYGYASNGSVYFDTAKFAASEKHSYGKLVPEAVGDQKALQEGEGDLSISADRLSEKRSPNDFALWKASKPGEPSWPCPWGKGRPGWHIECSAMAGTLLGASMDIHGGGFDLRFPHHDNELAQSEAYFENDCWVRYFLHTGHLTIAGCKMSKSLKNFITIKDALKKHSARQLRLAFLMHSWKDTLDYSSNTMESALQYEKFMNEFFLNVKDILRAPVDITGQFEKWEAEEVELNKNFYGKKTAVHEALCDNIDTRTVMEEMRALVSQCNLYMAARKAERRRPNRALLENIAMYLTHMLKIFGAIEEESPLGFPVGGPGTNLNLESTVMPYLQVLSEFREGVRKIAREKKVLEVLQLSDALRDDILPELGVRFEDHEGLPTVVKLVDRDTLLKEKEGKKRAEEEKRRKKEEAARKKQEQEAAKLAKMKIPPSEMFLSEVNKYSKFDENGLPTHDTEGKELSKGQAKKLKKLFEAQEKLYKEYLQMLQNGSLQ.

A2 is subject to N-acetylalanine. S102 is modified (phosphoserine). Residue C138 coordinates Zn(2+). An L-cysteine-binding site is contributed by G139. The short motif at 140 to 150 (PTVYDASHMGH) is the 'HIGH' region element. Residue T179 coordinates L-cysteine. Positions 184-187 (KIIR) match the 'KIIK' region motif. S388 and S390 each carry phosphoserine. The Zn(2+) site is built by C431, H456, and E460. An L-cysteine-binding site is contributed by H456. The 'KMSKS' region motif lies at 489 to 493 (KMSKS). K492 lines the ATP pocket. The segment covering 736–762 (GKKRAEEEKRRKKEEAARKKQEQEAAK) has biased composition (basic and acidic residues). The disordered stretch occupies residues 736 to 766 (GKKRAEEEKRRKKEEAARKKQEQEAAKLAKM). S829 is modified (phosphoserine).

It belongs to the class-I aminoacyl-tRNA synthetase family. Homodimer. Zn(2+) serves as cofactor.

The protein localises to the cytoplasm. The catalysed reaction is tRNA(Cys) + L-cysteine + ATP = L-cysteinyl-tRNA(Cys) + AMP + diphosphate. Functionally, catalyzes the ATP-dependent ligation of cysteine to tRNA(Cys). In Mus musculus (Mouse), this protein is Cysteine--tRNA ligase, cytoplasmic (Cars1).